The sequence spans 394 residues: 8-amino-7-oxononanoate synthase (394 aa).

Substrate is bound at residue arginine 22. Pyridoxal 5'-phosphate is bound at residue 113–114 (GY). Histidine 138 contributes to the substrate binding site. The pyridoxal 5'-phosphate site is built by serine 184, histidine 212, and threonine 240. An N6-(pyridoxal phosphate)lysine modification is found at lysine 243. Threonine 359 provides a ligand contact to substrate.

Belongs to the class-II pyridoxal-phosphate-dependent aminotransferase family. BioF subfamily. As to quaternary structure, homodimer. Requires pyridoxal 5'-phosphate as cofactor.

It catalyses the reaction 6-carboxyhexanoyl-[ACP] + L-alanine + H(+) = (8S)-8-amino-7-oxononanoate + holo-[ACP] + CO2. Its pathway is cofactor biosynthesis; biotin biosynthesis. Catalyzes the decarboxylative condensation of pimeloyl-[acyl-carrier protein] and L-alanine to produce 8-amino-7-oxononanoate (AON), [acyl-carrier protein], and carbon dioxide. The polypeptide is 8-amino-7-oxononanoate synthase (Janthinobacterium sp. (strain Marseille) (Minibacterium massiliensis)).